The primary structure comprises 382 residues: MSSFLSKRFLSFSQRAMSQESLKFKSLIYSSHDSQDCTKVLKVHNYKPKKGSETSIVLKTLAFPINPSDINQLEGVYPSKPDKVTDYSTDEPSAIAGNEGVFEVVSVPSSVSTLKPGDKVIPLQANFGTWSTYRTCDKESDLIKIEGVDIYTAATVAVNGCTAYQLVNDYINWDPKGNDWLVQNAGTSSVSKIVTQIAKAKNINTLSVIRDRENFEEVAEILEKKYGATKVISETENGEKEFGKEVLPKVLGSNAQVKLALNSVGGKSCANIARKLSKDGLMLTYGGMSKQPLTFPTGLFIFKGLKSHGFWVTENSKRDPENKIKTVNEVIELYRDGKIISPKEDIRALEWDVNNASDEEVLQLITDGIKTKGTKNMVILKW.

A mitochondrion-targeting transit peptide spans 1–17; the sequence is MSSFLSKRFLSFSQRAM. The active-site Proton donor is the Y77. NADP(+)-binding positions include N159, 187–190, 210–212, 285–288, 310–312, and K375; these read TSSV, RDR, YGGM, and FWV.

Belongs to the zinc-containing alcohol dehydrogenase family. Quinone oxidoreductase subfamily. In terms of assembly, homodimer.

The protein localises to the mitochondrion matrix. The catalysed reaction is a 2,3-saturated acyl-[ACP] + NADP(+) = a (2E)-enoyl-[ACP] + NADPH + H(+). Catalyzes the NADPH-dependent reduction of trans-2-enoyl thioesters in mitochondrial fatty acid synthesis (fatty acid synthesis type II). Fatty acid chain elongation in mitochondria uses acyl carrier protein (ACP) as an acyl group carrier, but the enzyme accepts both ACP and CoA thioesters as substrates in vitro. Required for respiration and the maintenance of the mitochondrial compartment. The protein is Enoyl-[acyl-carrier-protein] reductase, mitochondrial (ETR1) of Kluyveromyces lactis (strain ATCC 8585 / CBS 2359 / DSM 70799 / NBRC 1267 / NRRL Y-1140 / WM37) (Yeast).